The primary structure comprises 235 residues: Probable transcriptional regulatory protein Ccur92_05350 (235 aa).

The protein belongs to the TACO1 family.

The protein resides in the cytoplasm. This is Probable transcriptional regulatory protein Ccur92_05350 from Campylobacter curvus (strain 525.92).